The chain runs to 163 residues: Endoribonuclease YbeY (163 aa).

Residues histidine 121, histidine 125, and histidine 131 each contribute to the Zn(2+) site.

The protein belongs to the endoribonuclease YbeY family. Requires Zn(2+) as cofactor.

It is found in the cytoplasm. Its function is as follows. Single strand-specific metallo-endoribonuclease involved in late-stage 70S ribosome quality control and in maturation of the 3' terminus of the 16S rRNA. The sequence is that of Endoribonuclease YbeY from Synechococcus sp. (strain JA-3-3Ab) (Cyanobacteria bacterium Yellowstone A-Prime).